The sequence spans 131 residues: Small ribosomal subunit protein bS6 (131 aa).

The interval 98-131 (EASPMVKAKDERRERRDDFANETADDADAGDSEE) is disordered. Over residues 104 to 116 (KAKDERRERRDDF) the composition is skewed to basic and acidic residues. Positions 120–131 (TADDADAGDSEE) are enriched in acidic residues.

It belongs to the bacterial ribosomal protein bS6 family.

Functionally, binds together with bS18 to 16S ribosomal RNA. This chain is Small ribosomal subunit protein bS6, found in Citrobacter koseri (strain ATCC BAA-895 / CDC 4225-83 / SGSC4696).